An 876-amino-acid chain; its full sequence is GRB2-associated and regulator of MAPK protein (876 aa).

Residues 9 to 318 (KDVKWSSASF…NLIKGEVWQD (310 aa)) form a CABIT region. Tyr-451 is subject to Phosphotyrosine. Disordered stretches follow at residues 460 to 569 (SVKR…TLSY) and 708 to 741 (DRML…LSEP). Residues 461–471 (VKRSGQPLTRS) show a composition bias toward polar residues. The span at 532 to 549 (PPVPPRSSKPSSPTPSVP) shows a compositional bias: pro residues. Positions 556 to 569 (VRQQTRSPSPTLSY) are enriched in polar residues. Positions 811 to 876 (LSVEEVSKSL…QFINGWRPKM (66 aa)) constitute an SAM domain.

The protein belongs to the GAREM family.

In terms of biological role, adapter protein that may provide a link between cell surface epidermal growth factor receptor and the MAPK/ERK signaling pathway. May promote cell proliferation. The chain is GRB2-associated and regulator of MAPK protein (garem1) from Xenopus laevis (African clawed frog).